The primary structure comprises 368 residues: Aminomethyltransferase (368 aa).

The protein belongs to the GcvT family. In terms of assembly, the glycine cleavage system is composed of four proteins: P, T, L and H.

It carries out the reaction N(6)-[(R)-S(8)-aminomethyldihydrolipoyl]-L-lysyl-[protein] + (6S)-5,6,7,8-tetrahydrofolate = N(6)-[(R)-dihydrolipoyl]-L-lysyl-[protein] + (6R)-5,10-methylene-5,6,7,8-tetrahydrofolate + NH4(+). Functionally, the glycine cleavage system catalyzes the degradation of glycine. The sequence is that of Aminomethyltransferase from Xylella fastidiosa (strain M23).